A 643-amino-acid polypeptide reads, in one-letter code: Extracellular metalloproteinase 4 (643 aa).

Positions 1 to 18 (MHGLLLAGLLALPLNVLA) are cleaved as a signal peptide. The propeptide occupies 19–254 (HPTESHSSGI…VHSVVDYVSA (236 aa)). The span at 47–57 (TKSDAVPKQDD) shows a compositional bias: basic and acidic residues. A disordered region spans residues 47–71 (TKSDAVPKQDDESFTTSSTGDDNVS). Residues 60 to 71 (FTTSSTGDDNVS) are compositionally biased toward polar residues. Residues asparagine 271 and asparagine 420 are each glycosylated (N-linked (GlcNAc...) asparagine). Residue histidine 437 participates in Zn(2+) binding. The active site involves glutamate 438. Position 441 (histidine 441) interacts with Zn(2+). N-linked (GlcNAc...) asparagine glycosylation is present at asparagine 510.

It belongs to the peptidase M36 family. Zn(2+) serves as cofactor.

It is found in the secreted. Secreted metalloproteinase probably acting as a virulence factor. The polypeptide is Extracellular metalloproteinase 4 (MEP4) (Trichophyton equinum (Horse ringworm fungus)).